A 189-amino-acid polypeptide reads, in one-letter code: Probable nicotinate-nucleotide adenylyltransferase (189 aa).

The protein belongs to the NadD family.

It carries out the reaction nicotinate beta-D-ribonucleotide + ATP + H(+) = deamido-NAD(+) + diphosphate. Its pathway is cofactor biosynthesis; NAD(+) biosynthesis; deamido-NAD(+) from nicotinate D-ribonucleotide: step 1/1. In terms of biological role, catalyzes the reversible adenylation of nicotinate mononucleotide (NaMN) to nicotinic acid adenine dinucleotide (NaAD). The protein is Probable nicotinate-nucleotide adenylyltransferase of Bacillus cereus (strain ATCC 10987 / NRS 248).